Reading from the N-terminus, the 94-residue chain is Co-chaperonin GroES (94 aa).

The disordered stretch occupies residues 17-53 (DSNPNSPIQLPDSAKKKPTKGKVVSVGPGASNSDGKV).

The protein belongs to the GroES chaperonin family. Heptamer of 7 subunits arranged in a ring. Interacts with the chaperonin GroEL.

The protein localises to the cytoplasm. Functionally, together with the chaperonin GroEL, plays an essential role in assisting protein folding. The GroEL-GroES system forms a nano-cage that allows encapsulation of the non-native substrate proteins and provides a physical environment optimized to promote and accelerate protein folding. GroES binds to the apical surface of the GroEL ring, thereby capping the opening of the GroEL channel. This Anaplasma phagocytophilum (strain HZ) protein is Co-chaperonin GroES.